Here is a 227-residue protein sequence, read N- to C-terminus: Phosphoribosylformylglycinamidine synthase subunit PurQ (227 aa).

The Glutamine amidotransferase type-1 domain maps to 2–226; it reads KFAVIQFPGS…VKAWKEEQVN (225 aa). Catalysis depends on C86, which acts as the Nucleophile. Residues H195 and E197 contribute to the active site.

In terms of assembly, part of the FGAM synthase complex composed of 1 PurL, 1 PurQ and 2 PurS subunits.

It localises to the cytoplasm. The catalysed reaction is N(2)-formyl-N(1)-(5-phospho-beta-D-ribosyl)glycinamide + L-glutamine + ATP + H2O = 2-formamido-N(1)-(5-O-phospho-beta-D-ribosyl)acetamidine + L-glutamate + ADP + phosphate + H(+). It catalyses the reaction L-glutamine + H2O = L-glutamate + NH4(+). It functions in the pathway purine metabolism; IMP biosynthesis via de novo pathway; 5-amino-1-(5-phospho-D-ribosyl)imidazole from N(2)-formyl-N(1)-(5-phospho-D-ribosyl)glycinamide: step 1/2. Part of the phosphoribosylformylglycinamidine synthase complex involved in the purines biosynthetic pathway. Catalyzes the ATP-dependent conversion of formylglycinamide ribonucleotide (FGAR) and glutamine to yield formylglycinamidine ribonucleotide (FGAM) and glutamate. The FGAM synthase complex is composed of three subunits. PurQ produces an ammonia molecule by converting glutamine to glutamate. PurL transfers the ammonia molecule to FGAR to form FGAM in an ATP-dependent manner. PurS interacts with PurQ and PurL and is thought to assist in the transfer of the ammonia molecule from PurQ to PurL. The chain is Phosphoribosylformylglycinamidine synthase subunit PurQ from Listeria monocytogenes serotype 4a (strain HCC23).